The primary structure comprises 476 residues: Bifunctional protein HldE (476 aa).

Residues 1 to 320 are ribokinase; the sequence is MQNPHIPSFA…RAVHQEGGSG (320 aa). An ATP-binding site is contributed by 196 to 199; sequence NLSE. The active site involves D265. The interval 345 to 476 is cytidylyltransferase; the sequence is FTNGCFDIIH…KIVERIREKD (132 aa).

In the N-terminal section; belongs to the carbohydrate kinase PfkB family. The protein in the C-terminal section; belongs to the cytidylyltransferase family. Homodimer.

It catalyses the reaction D-glycero-beta-D-manno-heptose 7-phosphate + ATP = D-glycero-beta-D-manno-heptose 1,7-bisphosphate + ADP + H(+). The enzyme catalyses D-glycero-beta-D-manno-heptose 1-phosphate + ATP + H(+) = ADP-D-glycero-beta-D-manno-heptose + diphosphate. The protein operates within nucleotide-sugar biosynthesis; ADP-L-glycero-beta-D-manno-heptose biosynthesis; ADP-L-glycero-beta-D-manno-heptose from D-glycero-beta-D-manno-heptose 7-phosphate: step 1/4. It participates in nucleotide-sugar biosynthesis; ADP-L-glycero-beta-D-manno-heptose biosynthesis; ADP-L-glycero-beta-D-manno-heptose from D-glycero-beta-D-manno-heptose 7-phosphate: step 3/4. Catalyzes the phosphorylation of D-glycero-D-manno-heptose 7-phosphate at the C-1 position to selectively form D-glycero-beta-D-manno-heptose-1,7-bisphosphate. Functionally, catalyzes the ADP transfer from ATP to D-glycero-beta-D-manno-heptose 1-phosphate, yielding ADP-D-glycero-beta-D-manno-heptose. This Alcanivorax borkumensis (strain ATCC 700651 / DSM 11573 / NCIMB 13689 / SK2) protein is Bifunctional protein HldE.